The following is a 217-amino-acid chain: Large ribosomal subunit protein uL1A (217 aa).

Residue Ser-2 is modified to N-acetylserine. Lys-47 is subject to N6-methyllysine; by RKM5. 2 positions are modified to phosphoserine: Ser-79 and Ser-86.

The protein belongs to the universal ribosomal protein uL1 family. Component of the large ribosomal subunit (LSU). Mature yeast ribosomes consist of a small (40S) and a large (60S) subunit. The 40S small subunit contains 1 molecule of ribosomal RNA (18S rRNA) and 33 different proteins (encoded by 57 genes). The large 60S subunit contains 3 rRNA molecules (25S, 5.8S and 5S rRNA) and 46 different proteins (encoded by 81 genes). uL1 forms part of the L1 stalk. Post-translationally, N-terminally acetylated by acetyltransferase NatA.

The protein resides in the cytoplasm. Its function is as follows. Component of the ribosome, a large ribonucleoprotein complex responsible for the synthesis of proteins in the cell. The small ribosomal subunit (SSU) binds messenger RNAs (mRNAs) and translates the encoded message by selecting cognate aminoacyl-transfer RNA (tRNA) molecules. The large subunit (LSU) contains the ribosomal catalytic site termed the peptidyl transferase center (PTC), which catalyzes the formation of peptide bonds, thereby polymerizing the amino acids delivered by tRNAs into a polypeptide chain. The nascent polypeptides leave the ribosome through a tunnel in the LSU and interact with protein factors that function in enzymatic processing, targeting, and the membrane insertion of nascent chains at the exit of the ribosomal tunnel. uL1 forms part of the L1 stalk, a mobile element that plays a role in evacuating the exit-site tRNA. This Saccharomyces cerevisiae (strain ATCC 204508 / S288c) (Baker's yeast) protein is Large ribosomal subunit protein uL1A.